The chain runs to 529 residues: Bifunctional purine biosynthesis protein PurH (529 aa).

An MGS-like domain is found at 2 to 149 (TDLHPVRRAL…KNHAFVNVVV (148 aa)).

Belongs to the PurH family.

The enzyme catalyses (6R)-10-formyltetrahydrofolate + 5-amino-1-(5-phospho-beta-D-ribosyl)imidazole-4-carboxamide = 5-formamido-1-(5-phospho-D-ribosyl)imidazole-4-carboxamide + (6S)-5,6,7,8-tetrahydrofolate. The catalysed reaction is IMP + H2O = 5-formamido-1-(5-phospho-D-ribosyl)imidazole-4-carboxamide. It participates in purine metabolism; IMP biosynthesis via de novo pathway; 5-formamido-1-(5-phospho-D-ribosyl)imidazole-4-carboxamide from 5-amino-1-(5-phospho-D-ribosyl)imidazole-4-carboxamide (10-formyl THF route): step 1/1. Its pathway is purine metabolism; IMP biosynthesis via de novo pathway; IMP from 5-formamido-1-(5-phospho-D-ribosyl)imidazole-4-carboxamide: step 1/1. This is Bifunctional purine biosynthesis protein PurH from Ruegeria sp. (strain TM1040) (Silicibacter sp.).